The following is a 358-amino-acid chain: Golgi-resident adenosine 3',5'-bisphosphate 3'-phosphatase (358 aa).

Met-1 is subject to N-acetylmethionine. Residues Met-1–Gly-12 lie on the Cytoplasmic side of the membrane. Residues Val-13–Ala-33 form a helical membrane-spanning segment. The Lumenal segment spans residues Gly-34 to His-358. The disordered stretch occupies residues Arg-85–Met-106. Asp-110 functions as the Proton acceptor in the catalytic mechanism. Mg(2+) is bound by residues Glu-133, Asp-174, Leu-176, and Asp-177. Thr-179 functions as the Proton acceptor in the catalytic mechanism. Residues Ser-242 and His-245 each coordinate AMP. The N-linked (GlcNAc...) asparagine glycan is linked to Asn-259. AMP-binding residues include Gly-268 and Lys-272. Asp-300 contributes to the Mg(2+) binding site.

The protein belongs to the inositol monophosphatase superfamily. Mg(2+) is required as a cofactor. Contains N-linked glycan resistant to endoglycosydase H.

Its subcellular location is the golgi apparatus. The protein localises to the trans-Golgi network membrane. It catalyses the reaction adenosine 3',5'-bisphosphate + H2O = AMP + phosphate. Its pathway is sulfur metabolism. Strongly inhibited by lithium. In terms of biological role, exhibits 3'-nucleotidase activity toward adenosine 3',5'-bisphosphate (PAP), namely hydrolyzes adenosine 3',5'-bisphosphate into adenosine 5'-monophosphate (AMP) and a phosphate. May play a role in the formation of skeletal elements derived through endochondral ossification, possibly by clearing adenosine 3',5'-bisphosphate produced by Golgi sulfotransferases during glycosaminoglycan sulfation. Has no activity toward 3'-phosphoadenosine 5'-phosphosulfate (PAPS) or inositol phosphate (IP) substrates including I(1)P, I(1,4)P2, I(1,3,4)P3, I(1,4,5)P3 and I(1,3,4,5)P4. In Callithrix jacchus (White-tufted-ear marmoset), this protein is Golgi-resident adenosine 3',5'-bisphosphate 3'-phosphatase (BPNT2).